The chain runs to 352 residues: Uroporphyrinogen decarboxylase (352 aa).

Residues 26 to 30, Phe45, Asp76, Tyr153, Ser208, and His323 contribute to the substrate site; that span reads RQAGR.

Belongs to the uroporphyrinogen decarboxylase family. In terms of assembly, homodimer.

Its subcellular location is the cytoplasm. The catalysed reaction is uroporphyrinogen III + 4 H(+) = coproporphyrinogen III + 4 CO2. Its pathway is porphyrin-containing compound metabolism; protoporphyrin-IX biosynthesis; coproporphyrinogen-III from 5-aminolevulinate: step 4/4. Catalyzes the decarboxylation of four acetate groups of uroporphyrinogen-III to yield coproporphyrinogen-III. This Parasynechococcus marenigrum (strain WH8102) protein is Uroporphyrinogen decarboxylase.